Consider the following 263-residue polypeptide: Methylesterase 4 (263 aa).

S84 functions as the Acyl-ester intermediate in the catalytic mechanism. Active-site charge relay system residues include D213 and H241.

This sequence belongs to the AB hydrolase superfamily. Methylesterase family.

It carries out the reaction methyl salicylate + H2O = salicylate + methanol + H(+). It functions in the pathway plant hormone biosynthesis. With respect to regulation, esterase activity is down-regulated by salicylic acid (SA). In terms of biological role, methylesterase shown to have carboxylesterase activity and methyl salicylate (MeSA) esterase activity in vitro. This chain is Methylesterase 4, found in Arabidopsis thaliana (Mouse-ear cress).